Reading from the N-terminus, the 299-residue chain is Spermatocyte protein spe-11 (299 aa).

Residues 1 to 38 (MSDEEIDISTALNNKTTPKKKSLKRNSNSQEGYESPEE) are disordered.

As to expression, expressed in mature sperm.

It localises to the cytoplasm. Its subcellular location is the perinuclear region. Its function is as follows. Paternally sperm-supplied factor required for embryogenesis. Plays a role in preventing polyspermy possibly by promoting the formation of a continuous and cohesive eggshell chitin layer. The polypeptide is Spermatocyte protein spe-11 (spe-11) (Caenorhabditis elegans).